The chain runs to 193 residues: Intracellular heme transport protein HutX (193 aa).

Residue Tyr-116 coordinates heme.

Homodimer. Interacts with HutZ.

Its subcellular location is the cytoplasm. Its function is as follows. Binds heme. Heme is transferred to the heme-degrading enzyme HutZ via a specific protein-protein interaction. The sequence is that of Intracellular heme transport protein HutX from Vibrio cholerae serotype O1 (strain ATCC 39315 / El Tor Inaba N16961).